The sequence spans 756 residues: 5-methyltetrahydropteroyltriglutamate--homocysteine methyltransferase (756 aa).

5-methyltetrahydropteroyltri-L-glutamate-binding positions include 15 to 18 (REWK) and Lys111. The segment at 392-411 (GAATSHNLENKKRPQSFNER) is disordered. Positions 399–411 (LENKKRPQSFNER) are enriched in basic and acidic residues. L-homocysteine is bound by residues 429-431 (IGS) and Glu482. L-methionine-binding positions include 429–431 (IGS) and Glu482. 5-methyltetrahydropteroyltri-L-glutamate-binding positions include 513-514 (RC) and Trp559. L-homocysteine is bound at residue Asp597. Position 597 (Asp597) interacts with L-methionine. Glu603 lines the 5-methyltetrahydropteroyltri-L-glutamate pocket. Zn(2+)-binding residues include His639, Cys641, and Glu663. The active-site Proton donor is the His692. Cys724 serves as a coordination point for Zn(2+).

The protein belongs to the vitamin-B12 independent methionine synthase family. It depends on Zn(2+) as a cofactor.

The enzyme catalyses 5-methyltetrahydropteroyltri-L-glutamate + L-homocysteine = tetrahydropteroyltri-L-glutamate + L-methionine. Its pathway is amino-acid biosynthesis; L-methionine biosynthesis via de novo pathway; L-methionine from L-homocysteine (MetE route): step 1/1. Catalyzes the transfer of a methyl group from 5-methyltetrahydrofolate to homocysteine resulting in methionine formation. This Halalkalibacterium halodurans (strain ATCC BAA-125 / DSM 18197 / FERM 7344 / JCM 9153 / C-125) (Bacillus halodurans) protein is 5-methyltetrahydropteroyltriglutamate--homocysteine methyltransferase.